The chain runs to 279 residues: NAD kinase (279 aa).

The active-site Proton acceptor is aspartate 61. NAD(+)-binding positions include 61–62 (DG), 138–139 (ND), lysine 149, lysine 166, aspartate 168, and 179–184 (TGYSFS).

Belongs to the NAD kinase family. The cofactor is a divalent metal cation.

The protein localises to the cytoplasm. It carries out the reaction NAD(+) + ATP = ADP + NADP(+) + H(+). Its function is as follows. Involved in the regulation of the intracellular balance of NAD and NADP, and is a key enzyme in the biosynthesis of NADP. Catalyzes specifically the phosphorylation on 2'-hydroxyl of the adenosine moiety of NAD to yield NADP. This Borrelia garinii subsp. bavariensis (strain ATCC BAA-2496 / DSM 23469 / PBi) (Borreliella bavariensis) protein is NAD kinase.